Reading from the N-terminus, the 282-residue chain is Large ribosomal subunit protein uL2 (282 aa).

Positions 215–282 (RHKGIRPTVR…IIRSRKETKK (68 aa)) are disordered. Basic residues predominate over residues 263–282 (RNPKKPSTKLIIRSRKETKK).

This sequence belongs to the universal ribosomal protein uL2 family. As to quaternary structure, part of the 50S ribosomal subunit. Forms a bridge to the 30S subunit in the 70S ribosome.

Its function is as follows. One of the primary rRNA binding proteins. Required for association of the 30S and 50S subunits to form the 70S ribosome, for tRNA binding and peptide bond formation. It has been suggested to have peptidyltransferase activity; this is somewhat controversial. Makes several contacts with the 16S rRNA in the 70S ribosome. This Mesomycoplasma hyopneumoniae (strain 7448) (Mycoplasma hyopneumoniae) protein is Large ribosomal subunit protein uL2.